Consider the following 98-residue polypeptide: NADH-ubiquinone oxidoreductase chain 4L (98 aa).

3 helical membrane passes run 1–21, 29–49, and 61–81; these read MSMV…GLLM, SLLC…VTIL, and IILL…LVMV.

It belongs to the complex I subunit 4L family. In terms of assembly, core subunit of respiratory chain NADH dehydrogenase (Complex I) which is composed of 45 different subunits.

Its subcellular location is the mitochondrion inner membrane. The enzyme catalyses a ubiquinone + NADH + 5 H(+)(in) = a ubiquinol + NAD(+) + 4 H(+)(out). Core subunit of the mitochondrial membrane respiratory chain NADH dehydrogenase (Complex I) which catalyzes electron transfer from NADH through the respiratory chain, using ubiquinone as an electron acceptor. Part of the enzyme membrane arm which is embedded in the lipid bilayer and involved in proton translocation. In Pusa hispida (Ringed seal), this protein is NADH-ubiquinone oxidoreductase chain 4L (MT-ND4L).